The following is a 326-amino-acid chain: Amino acid--[acyl-carrier-protein] ligase 1 (326 aa).

Cysteine 131 lines the Zn(2+) pocket. Residues arginine 159, glutamate 161, and 168–169 each bind ATP; that span reads RL. Zn(2+) is bound at residue glutamate 176. Glutamate 176 lines the an L-alpha-amino acid pocket. ATP-binding positions include lysine 235 and 250-253; that span reads ACMS. Cysteine 279 lines the Zn(2+) pocket. An ATP-binding site is contributed by arginine 286.

This sequence belongs to the class-II aminoacyl-tRNA synthetase family. Amino acid--[acyl-carrier-protein] ligase subfamily. Homodimer. The cofactor is Zn(2+).

It carries out the reaction an L-alpha-amino acid + holo-[ACP] + ATP = an L-alpha-aminoacyl-[ACP] + AMP + diphosphate. Its function is as follows. Catalyzes the ATP-dependent activation of L-glycine and its transfer to the phosphopantetheine prosthetic group covalently attached to the vicinal carrier protein bsr0959 of yet unknown function. May participate in nonribosomal peptide synthesis or related processes. L-alanine is a poor substrate whereas L-serine or D-amino acids are not substrates for ATP-dependent activation. Does not display tRNA aminoacylation activity. The chain is Amino acid--[acyl-carrier-protein] ligase 1 from Bradyrhizobium diazoefficiens (strain JCM 10833 / BCRC 13528 / IAM 13628 / NBRC 14792 / USDA 110).